Here is a 447-residue protein sequence, read N- to C-terminus: MSGSRRKATPASRTRVGNYEMGRTLGEGSFAKVKYAKNTVTGDQAAIKILDREKVFRHKMVEQLKREISTMKLIKHPNVVEIIEVMASKTKIYIVLELVNGGELFDKIAQQGRLKEDEARRYFQQLINAVDYCHSRGVYHRDLKPENLILDANGVLKVSDFGLSAFSRQVREDGLLHTACGTPNYVAPEVLSDKGYDGAAADVWSCGVILFVLMAGYLPFDEPNLMTLYKRICKAEFSCPPWFSQGAKRVIKRILEPNPITRISIAELLEDEWFKKGYKPPSFDQDDEDITIDDVDAAFSNSKECLVTEKKEKPVSMNAFELISSSSEFSLENLFEKQAQLVKKETRFTSQRSASEIMSKMEETAKPLGFNVRKDNYKIKMKGDKSGRKGQLSVATEVFEVAPSLHVVELRKTGGDTLEFHKFYKNFSSGLKDVVWNTDAAAEEQKQ.

The Protein kinase domain maps to 19 to 274; that stretch reads YEMGRTLGEG…IAELLEDEWF (256 aa). Residues 25–33 and K48 each bind ATP; that span reads LGEGSFAKV. Residue D142 is the Proton acceptor of the active site. Residues 160-189 form an activation loop region; sequence DFGLSAFSRQVREDGLLHTACGTPNYVAPE. S164 bears the Phosphoserine mark. Position 178 is a phosphothreonine (T178). An NAF domain is found at 312–336; it reads EKPVSMNAFELISSSSEFSLENLFE. A PPI region spans residues 343–372; that stretch reads KKETRFTSQRSASEIMSKMEETAKPLGFNV.

Belongs to the protein kinase superfamily. CAMK Ser/Thr protein kinase family. SNF1 subfamily. As to quaternary structure, interacts with CBL2 and CBL3. Requires Mn(2+) as cofactor. As to expression, expressed at low levels in roots and shoots. Detected in root vascular bundles and in the leaf vascular tissue and hydathode, but not in root tips.

The protein resides in the cytoplasm. The protein localises to the nucleus. It catalyses the reaction L-seryl-[protein] + ATP = O-phospho-L-seryl-[protein] + ADP + H(+). The catalysed reaction is L-threonyl-[protein] + ATP = O-phospho-L-threonyl-[protein] + ADP + H(+). Functionally, CIPK serine-threonine protein kinases interact with CBL proteins. Binding of a CBL protein to the regulatory NAF domain of CIPK protein lead to the activation of the kinase in a calcium-dependent manner. Involved in K(+) homeostasis under low-K(+) stress. In Arabidopsis thaliana (Mouse-ear cress), this protein is CBL-interacting serine/threonine-protein kinase 9 (CIPK9).